Reading from the N-terminus, the 492-residue chain is Beclin 1-associated autophagy-related key regulator (492 aa).

Ser29 carries the phosphoserine modification. Residues 70–180 (RDRERFIDKK…KLGDLVEKKT (111 aa)) are a coiled coil. 2 disordered regions span residues 213-232 (TSGR…MTSS) and 411-473 (GVAG…AGGM). The span at 222-232 (SSETDSAMTSS) shows a compositional bias: polar residues. Ser416 carries the phosphoserine modification. Positions 424–433 (VSDEETDLGT) are enriched in acidic residues. Residue Thr429 is modified to Phosphothreonine. The segment covering 447-473 (PSQPVEVSQSQSTQASPPIASSSAGGM) has biased composition (low complexity).

The protein belongs to the ATG14 family. As to quaternary structure, forms homooligomers; homo-oligomerization is essential for the roles in membrane tethering and enhancement of SNARE-mediated fusion. Component of the PI3K (PI3KC3/PI3K-III/class III phosphatidylinositol 3-kinase) complex I (PI3KC3-C1) in which the core composed of the catalytic subunit PIK3C3, the regulatory subunit PIK3R4 and BECN1 is associated with ATG14. PI3KC3-C1 displays a V-shaped architecture with PIK3R4 serving as a bridge between PIK3C3 and the ATG14:BECN1 subcomplex. PI3KC3-C1 can associate with further regulatory subunits. Interacts with PIK3CB. Interacts (via coiled-coil domain) with BECN2 (via coiled-coil domain); this interaction is tighter than BECN2 self-association. Interacts with the STX17-SNAP29 binary t-SNARE complex. Interacts with NRBF2. Interacts with PIK3C3 and BECN1; this interaction is increased in the absence of TMEM39A. Interacts with STEEP1; the interaction is required for trafficking of STING1 from the endoplasmic reticulum. Interacts with ARMC3 (via ARM domains). In terms of processing, ubiquitinated via 'Lys-6', 'Lys-11' and 'Lys-63'-linked polyubiquitin chains on multiple lysines by MARCHF7, leading to ATG14 aggregation and loss of interaction with STX17.

Its subcellular location is the cytoplasm. The protein resides in the endoplasmic reticulum membrane. It localises to the preautophagosomal structure membrane. In terms of biological role, required for both basal and inducible autophagy. Determines the localization of the autophagy-specific PI3-kinase complex. Plays a role in autophagosome formation and MAP1LC3/LC3 conjugation to phosphatidylethanolamine. Promotes BECN1 translocation from the trans-Golgi network to autophagosomes. Enhances PIK3C3 activity in a BECN1-dependent manner. Essential for the autophagy-dependent phosphorylation of BECN1. Stimulates the phosphorylation of BECN1, but suppresses the phosphorylation PIK3C3 by AMPK. Binds to STX17-SNAP29 binary t-SNARE complex on autophagosomes and primes it for VAMP8 interaction to promote autophagosome-endolysosome fusion. Modulates the hepatic lipid metabolism. This chain is Beclin 1-associated autophagy-related key regulator, found in Rattus norvegicus (Rat).